The chain runs to 446 residues: Tubulin beta-6 chain (446 aa).

Positions 1 to 4 (MREI) match the MREI motif motif. Residues Q11, E69, S138, G142, T143, and G144 each coordinate GTP. E69 is a Mg(2+) binding site. At S172 the chain carries Phosphoserine; by CDK1. Residues N204 and N226 each coordinate GTP. E438 is subject to 5-glutamyl polyglutamate.

The protein belongs to the tubulin family. Dimer of alpha and beta chains. A typical microtubule is a hollow water-filled tube with an outer diameter of 25 nm and an inner diameter of 15 nM. Alpha-beta heterodimers associate head-to-tail to form protofilaments running lengthwise along the microtubule wall with the beta-tubulin subunit facing the microtubule plus end conferring a structural polarity. Microtubules usually have 13 protofilaments but different protofilament numbers can be found in some organisms and specialized cells. The cofactor is Mg(2+). Post-translationally, some glutamate residues at the C-terminus are polyglutamylated, resulting in polyglutamate chains on the gamma-carboxyl group. Polyglutamylation plays a key role in microtubule severing by spastin (SPAST). SPAST preferentially recognizes and acts on microtubules decorated with short polyglutamate tails: severing activity by SPAST increases as the number of glutamates per tubulin rises from one to eight, but decreases beyond this glutamylation threshold. Glutamylation is also involved in cilia motility. In terms of processing, some glutamate residues at the C-terminus are monoglycylated but not polyglycylated due to the absence of functional TTLL10 in human. Monoglycylation is mainly limited to tubulin incorporated into cilia and flagella axonemes, which is required for their stability and maintenance. Flagella glycylation controls sperm motility. Both polyglutamylation and monoglycylation can coexist on the same protein on adjacent residues, and lowering glycylation levels increases polyglutamylation, and reciprocally. Phosphorylated on Ser-172 by CDK1 during the cell cycle, from metaphase to telophase, but not in interphase. This phosphorylation inhibits tubulin incorporation into microtubules. In terms of tissue distribution, ubiquitous. Maximal expression in breast and lung, where it represents around 10% of all beta-tubulins. Largely decreased expression in most cancerous tissues.

It localises to the cytoplasm. The protein localises to the cytoskeleton. Tubulin is the major constituent of microtubules, a cylinder consisting of laterally associated linear protofilaments composed of alpha- and beta-tubulin heterodimers. Microtubules grow by the addition of GTP-tubulin dimers to the microtubule end, where a stabilizing cap forms. Below the cap, tubulin dimers are in GDP-bound state, owing to GTPase activity of alpha-tubulin. This Homo sapiens (Human) protein is Tubulin beta-6 chain (TUBB6).